A 302-amino-acid chain; its full sequence is Cuticle collagen dpy-13 (302 aa).

Triple-helical region stretches follow at residues 106 to 135 (GPQG…PGKA), 154 to 210 (GPPG…EGLP), and 219 to 278 (GEPG…PGTP). A disordered region spans residues 108–284 (QGAPGAPGKP…PGTPGERGIC (177 aa)). A compositionally biased stretch (pro residues) spans 144 to 159 (TPPPCKPCPQGPPGAP). Low complexity predominate over residues 188-197 (PKGPNGAPGK). 2 stretches are compositionally biased toward pro residues: residues 247–257 (QPGPKGPPGPD) and 268–277 (QPGPVGPPGT).

This sequence belongs to the cuticular collagen family. In terms of assembly, collagen polypeptide chains are complexed within the cuticle by disulfide bonds and other types of covalent cross-links.

In terms of biological role, nematode cuticles are composed largely of collagen-like proteins. The cuticle functions both as an exoskeleton and as a barrier to protect the worm from its environment. Mutations in dpy-13 affects the body shape. This Caenorhabditis elegans protein is Cuticle collagen dpy-13 (dpy-13).